A 501-amino-acid polypeptide reads, in one-letter code: ADP,ATP carrier protein 3 (501 aa).

Transmembrane regions (helical) follow at residues 23–43 (LKLFIPMALMMLCILFNFGAL), 59–79 (IISLFKLWLVLPSCVIFTVLY), 90–110 (YIFYIIVGSFLLFFLLFAYII), 146–166 (YALMYIFSELWSAVVINLMFW), 183–203 (PVLGMVGNIGLIIAGSVLVFF), 227–247 (IMLQPIMSIIVAAGIIAMLLF), 293–313 (IALLIICYGLLINIVEGPWKA), 326–346 (FNFMGRFNIWMGISCVTFMVI), 361–381 (LLTPIMLSITGLMFFIFIIFI), 383–403 (EIGACFGDFNLLYAAIIVGAI), 446–466 (FGKSLGAFIQSLIFIIIPTAT), and 470–490 (IIIYLLVIFIVMMSLWIWNVI).

Belongs to the ADP/ATP translocase tlc family.

It localises to the cell membrane. Its function is as follows. Provides the rickettsial cell with host ATP in exchange for rickettsial ADP. This is an obligate exchange system. This energy acquiring activity is an important component of rickettsial parasitism. The chain is ADP,ATP carrier protein 3 (tlcC) from Rickettsia felis (strain ATCC VR-1525 / URRWXCal2) (Rickettsia azadi).